We begin with the raw amino-acid sequence, 102 residues long: Biotrophy-associated secreted protein 2 (102 aa).

The signal sequence occupies residues 1–19 (MVRVSTFAAILAMALSVTA). The N-linked (GlcNAc...) asparagine glycan is linked to Asn46.

It is found in the secreted. Functionally, secreted effector involved in biotrophic colonization of plant cells. The sequence is that of Biotrophy-associated secreted protein 2 from Pyricularia oryzae (strain 70-15 / ATCC MYA-4617 / FGSC 8958) (Rice blast fungus).